Here is a 123-residue protein sequence, read N- to C-terminus: Small ribosomal subunit protein uS12 (123 aa).

Aspartate 89 is subject to 3-methylthioaspartic acid.

This sequence belongs to the universal ribosomal protein uS12 family. As to quaternary structure, part of the 30S ribosomal subunit. Contacts proteins S8 and S17. May interact with IF1 in the 30S initiation complex.

With S4 and S5 plays an important role in translational accuracy. Functionally, interacts with and stabilizes bases of the 16S rRNA that are involved in tRNA selection in the A site and with the mRNA backbone. Located at the interface of the 30S and 50S subunits, it traverses the body of the 30S subunit contacting proteins on the other side and probably holding the rRNA structure together. The combined cluster of proteins S8, S12 and S17 appears to hold together the shoulder and platform of the 30S subunit. The chain is Small ribosomal subunit protein uS12 from Trichlorobacter lovleyi (strain ATCC BAA-1151 / DSM 17278 / SZ) (Geobacter lovleyi).